Reading from the N-terminus, the 224-residue chain is 7-cyano-7-deazaguanine synthase (224 aa).

Residue 10 to 20 (LSGGLDSATVV) coordinates ATP. Zn(2+) contacts are provided by Cys189, Cys199, Cys202, and Cys205.

It belongs to the QueC family. Zn(2+) is required as a cofactor.

It catalyses the reaction 7-carboxy-7-deazaguanine + NH4(+) + ATP = 7-cyano-7-deazaguanine + ADP + phosphate + H2O + H(+). Its pathway is purine metabolism; 7-cyano-7-deazaguanine biosynthesis. Functionally, catalyzes the ATP-dependent conversion of 7-carboxy-7-deazaguanine (CDG) to 7-cyano-7-deazaguanine (preQ(0)). This Pseudomonas aeruginosa (strain LESB58) protein is 7-cyano-7-deazaguanine synthase.